A 139-amino-acid polypeptide reads, in one-letter code: D-ribose pyranase (139 aa).

His20 (proton donor) is an active-site residue. Residues Asp28, His106, and 128–130 each bind substrate; that span reads YAN.

The protein belongs to the RbsD / FucU family. RbsD subfamily. In terms of assembly, homodecamer.

The protein localises to the cytoplasm. It catalyses the reaction beta-D-ribopyranose = beta-D-ribofuranose. Its pathway is carbohydrate metabolism; D-ribose degradation; D-ribose 5-phosphate from beta-D-ribopyranose: step 1/2. In terms of biological role, catalyzes the interconversion of beta-pyran and beta-furan forms of D-ribose. This Salmonella paratyphi B (strain ATCC BAA-1250 / SPB7) protein is D-ribose pyranase.